Consider the following 380-residue polypeptide: Endonuclease III homolog 2 (380 aa).

The short motif at 8–12 (RKRKH) is the Nuclear localization signal element. Residues 15–40 (VDIEEVEVRSKYFKKNERTVELVKEN) are interaction with MLH1. Lys-194 is covalently cross-linked (Glycyl lysine isopeptide (Lys-Gly) (interchain with G-Cter in SUMO)). The HhH domain occupies 228–252 (FDSDIPYDIEGILSLPGVGPKMGYL). Lys-248 (nucleophile; for N-glycosylase activity) is an active-site residue. 4 residues coordinate [4Fe-4S] cluster: Cys-319, Cys-326, Cys-329, and Cys-335. Positions 376-380 (RHKKK) match the Nuclear localization signal motif.

It belongs to the Nth/MutY family. As to quaternary structure, interacts with MLH1. [4Fe-4S] cluster is required as a cofactor. In terms of processing, monosumoylated.

It localises to the nucleus. The catalysed reaction is 2'-deoxyribonucleotide-(2'-deoxyribose 5'-phosphate)-2'-deoxyribonucleotide-DNA = a 3'-end 2'-deoxyribonucleotide-(2,3-dehydro-2,3-deoxyribose 5'-phosphate)-DNA + a 5'-end 5'-phospho-2'-deoxyribonucleoside-DNA + H(+). Its function is as follows. Bifunctional DNA N-glycosylase with associated apurinic/apyrimidinic (AP) lyase function that catalyzes the first step in base excision repair (BER), the primary repair pathway for the repair of oxidative DNA damage. The DNA N-glycosylase activity releases the damaged DNA base from DNA by cleaving the N-glycosidic bond, leaving an AP site. The AP-lyase activity cleaves the phosphodiester bond 3' to the AP site by a beta-elimination. Primarily recognizes and repairs oxidative base damage of pyrimidines, but also purine-derived lesions, alkylation damage as well as abasic sites. Can also repair the oxidation products of 8-oxoguanine. The protein is Endonuclease III homolog 2 (NTG2) of Saccharomyces cerevisiae (strain ATCC 204508 / S288c) (Baker's yeast).